We begin with the raw amino-acid sequence, 301 residues long: Hydrogen peroxide-inducible genes activator (301 aa).

In terms of domain architecture, HTH lysR-type spans 1–58; the sequence is MNIRDLEYLVALSEYKHFRRAADSCNVSQPTLSGQIRKLEDELGIILLERTSRKVLFT. Positions 18–37 form a DNA-binding region, H-T-H motif; sequence FRRAADSCNVSQPTLSGQIR.

Belongs to the LysR transcriptional regulatory family.

In terms of biological role, required for the induction of a regulon of hydrogen peroxide inducible genes such as catalase and glutathione-reductase. In Haemophilus influenzae (strain ATCC 51907 / DSM 11121 / KW20 / Rd), this protein is Hydrogen peroxide-inducible genes activator (oxyR).